Reading from the N-terminus, the 783-residue chain is Transcription factor E4F1 (783 aa).

Residues 40-84 (GFLGLPAPFSEEDEDDVHRCGRCQVEFTALEDFVQHKIQKTCHRA) form a required for ubiquitin ligase activity region. Residue Ser49 is modified to Phosphoserine. The mediates dimerization, DNA-binding, transcription repression of CCNA2 and interaction with HMGA2 stretch occupies residues 185-264 (LLVNKEGRYV…GKSFRESGAL (80 aa)). C2H2-type zinc fingers lie at residues 193–215 (YVCMLCHKTFKTGSILKAHMVTH) and 221–243 (HECKLCGASFRTKGSLIRHHRRH). The segment at 249–273 (YKCAKCGKSFRESGALTRHLKSLTP) adopts a C2H2-type 3; degenerate zinc-finger fold. A mediates interaction with CDKN2A region spans residues 368-565 (NLLHQAMQNS…REKGSLVRHV (198 aa)). The interval 386–407 (GEESALEPAPPSGSSPQCLGDG) is disordered. C2H2-type zinc fingers lie at residues 434–456 (HPCPQCSETFPTAATLEAHKRGH), 462–484 (FTCTQCGKAFPKAYLLKKHQEVH), 490–512 (FRCGDCGKLYKTIAHVRGHRRVH), 518–540 (FPCPQCGKRYKTKNAQQVHFRTH), and 546–568 (HVCQFCSRGFREKGSLVRHVRHH). Positions 434 to 598 (HPCPQCSETF…LNRHLRTKGG (165 aa)) are interaction with BMI1. Residues 520-579 (CPQCGKRYKTKNAQQVHFRTHLEEKPHVCQFCSRGFREKGSLVRHVRHHTGEKPFKCYKC) form a mediates interaction with TP53 region. The C2H2-type 9; degenerate zinc-finger motif lies at 574 to 596 (FKCYKCGRGFAEHGTLNRHLRTK). Positions 574–596 (FKCYKCGRGFAEHGTLNRHLRTK) are mediates interaction with RASSF1.

As to quaternary structure, homodimer; binds DNA as a dimer. Forms a complex with CDKN2A and TP53. Interacts with HDAC1, HMGA2 and RASSF1. Interactions with TP53, RB1, ANP32A and probably BMI1 and FHL2 regulate E4F1 activity. In terms of processing, phosphorylated; phosphorylation is cell cycle-dependent and regulates DNA-binding activity and function. May be sumoylated by UBE2I upon interaction with CDKN2A. As to expression, ubiquitously expressed.

The protein localises to the nucleus. It localises to the nucleoplasm. It is found in the cytoplasm. It carries out the reaction S-ubiquitinyl-[E2 ubiquitin-conjugating enzyme]-L-cysteine + [acceptor protein]-L-lysine = [E2 ubiquitin-conjugating enzyme]-L-cysteine + N(6)-ubiquitinyl-[acceptor protein]-L-lysine.. Its pathway is protein modification; protein ubiquitination. In terms of biological role, may function as a transcriptional repressor. May also function as a ubiquitin ligase mediating ubiquitination of chromatin-associated TP53. Functions in cell survival and proliferation through control of the cell cycle. Functions in the p53 and pRB tumor suppressor pathways and regulates the cyclin CCNA2 transcription. The polypeptide is Transcription factor E4F1 (E4f1) (Mus musculus (Mouse)).